The primary structure comprises 199 residues: NAD(P)H dehydrogenase (quinone) (199 aa).

The Flavodoxin-like domain occupies 4–190 (ILVLYYSMYG…KIARYQGEHV (187 aa)). FMN contacts are provided by residues 10–15 (SMYGHI) and 79–81 (TRF). Tyr-12 is a binding site for NAD(+). Trp-99 contacts substrate. His-134 contributes to the FMN binding site.

This sequence belongs to the WrbA family. FMN serves as cofactor.

The enzyme catalyses a quinone + NADH + H(+) = a quinol + NAD(+). It carries out the reaction a quinone + NADPH + H(+) = a quinol + NADP(+). This Photorhabdus laumondii subsp. laumondii (strain DSM 15139 / CIP 105565 / TT01) (Photorhabdus luminescens subsp. laumondii) protein is NAD(P)H dehydrogenase (quinone).